The primary structure comprises 131 residues: Small ribosomal subunit protein uS8 (131 aa).

It belongs to the universal ribosomal protein uS8 family. In terms of assembly, part of the 30S ribosomal subunit. Contacts proteins S5 and S12.

Functionally, one of the primary rRNA binding proteins, it binds directly to 16S rRNA central domain where it helps coordinate assembly of the platform of the 30S subunit. This chain is Small ribosomal subunit protein uS8, found in Dictyoglomus thermophilum (strain ATCC 35947 / DSM 3960 / H-6-12).